We begin with the raw amino-acid sequence, 304 residues long: WW domain-binding protein 1 (304 aa).

The disordered stretch occupies residues 1–26 (MARASSRNSSEEAWGSLQAPQQQQSP). 2 short sequence motifs (PPxY motif) span residues 159-162 (PPAY) and 172-176 (PPPPY). Disordered stretches follow at residues 206–235 (TNVEGVSSQQSALPHQEGEPRAGLSPVHIP) and 252–304 (CPCP…GDIP). Residues 209-218 (EGVSSQQSAL) are compositionally biased toward polar residues.

In terms of assembly, binds to the WW domain of YAP1, WWP1 and WWP2. Interacts with WWOX. Interacts with NEDD4.

The sequence is that of WW domain-binding protein 1 (Wbp1) from Mus musculus (Mouse).